Reading from the N-terminus, the 583-residue chain is Protein LONG AFTER FAR-RED 3 (583 aa).

A helical membrane pass occupies residues 7–27 (FPVMIGFVSAAVFLLISVAYL). N55 and N374 each carry an N-linked (GlcNAc...) asparagine glycan.

It belongs to the metallo-dependent hydrolases superfamily. Expressed at low level in seedlings, roots, leaves, stems, flowers, and siliques.

The protein resides in the membrane. It localises to the cytoplasm. It is found in the perinuclear region. In terms of biological role, required for phyA-controlled responses to continuous far-red light (FRc) conditions, including the inhibition of hypocotyl elongation and the regulation of XTH15/XTR7 expression. In Arabidopsis thaliana (Mouse-ear cress), this protein is Protein LONG AFTER FAR-RED 3.